Reading from the N-terminus, the 57-residue chain is uncharacterized protein (57 aa).

Residues 12–34 (VIAVLSLFVFAVAVFFVGMALLT) traverse the membrane as a helical segment.

Its subcellular location is the membrane. This is an uncharacterized protein from Pasteurella multocida (strain Pm70).